A 238-amino-acid polypeptide reads, in one-letter code: ATP synthase subunit a (238 aa).

The next 5 membrane-spanning stretches (helical) occupy residues 15-35 (IFNLTMLAMTLLIVGVIFVFI), 76-96 (YSLFFLCLFLFMVIANNLGLM), 111-131 (PTANLQYDLTLSFLVILLTHI), 167-187 (LALRIFGNIFAGEVMTSLLLL), and 208-230 (AFSVFISCIQAYVFTLLTSVYLG).

The protein belongs to the ATPase A chain family. In terms of assembly, F-type ATPases have 2 components, CF(1) - the catalytic core - and CF(0) - the membrane proton channel. CF(1) has five subunits: alpha(3), beta(3), gamma(1), delta(1), epsilon(1). CF(0) has three main subunits: a(1), b(2) and c(9-12). The alpha and beta chains form an alternating ring which encloses part of the gamma chain. CF(1) is attached to CF(0) by a central stalk formed by the gamma and epsilon chains, while a peripheral stalk is formed by the delta and b chains.

The protein resides in the cell membrane. Functionally, key component of the proton channel; it plays a direct role in the translocation of protons across the membrane. The sequence is that of ATP synthase subunit a from Streptococcus pneumoniae (strain 70585).